Here is a 34-residue protein sequence, read N- to C-terminus: Cytochrome b6-f complex subunit 7 (34 aa).

A helical transmembrane segment spans residues alanine 9–leucine 27.

This sequence belongs to the PetM family. As to quaternary structure, the 4 large subunits of the cytochrome b6-f complex are cytochrome b6, subunit IV (17 kDa polypeptide, PetD), cytochrome f and the Rieske protein, while the 4 small subunits are PetG, PetL, PetM and PetN. The complex functions as a dimer.

It localises to the cellular thylakoid membrane. Its function is as follows. Component of the cytochrome b6-f complex, which mediates electron transfer between photosystem II (PSII) and photosystem I (PSI), cyclic electron flow around PSI, and state transitions. The protein is Cytochrome b6-f complex subunit 7 of Nostoc punctiforme (strain ATCC 29133 / PCC 73102).